We begin with the raw amino-acid sequence, 714 residues long: Choline transporter-like protein 5 (714 aa).

The Cytoplasmic portion of the chain corresponds to 1-33; that stretch reads MGRRSAAPTSPFGEPRKFDPKFKGPIGKRHCTD. A helical transmembrane segment spans residues 34 to 54; that stretch reads VLCCIIFVVVILGYIALGVVA. Residues 55–237 lie on the Extracellular side of the membrane; it reads WIHGDPRKII…KIFEDYASSW (183 aa). N-linked (GlcNAc...) asparagine glycans are attached at residues asparagine 83, asparagine 132, asparagine 192, and asparagine 205. Residues 238-258 traverse the membrane as a helical segment; sequence YWILIALFIAMVVSLLFLILL. Residues 259–261 are Cytoplasmic-facing; it reads RFT. A helical membrane pass occupies residues 262–282; sequence AGVFFWIFIIGVIGVVGYGIW. Residues 283–320 are Extracellular-facing; it reads HCFWEYDSLKGVPGADLTIYDIGLQTDFRVYLQLRQTW. Residues 321–341 traverse the membrane as a helical segment; the sequence is LAFMILLCIVEVIIILMLIFL. At 342–346 the chain is on the cytoplasmic side; the sequence is RNRIR. A helical transmembrane segment spans residues 347–367; the sequence is IAIALLQEGSRAIGYIMSTLF. Residues 368 to 369 lie on the Extracellular side of the membrane; sequence YP. A helical membrane pass occupies residues 370 to 390; the sequence is IITFILIAICISYWAVTAVFM. Residues 391-455 lie on the Cytoplasmic side of the membrane; the sequence is ATSGEPIYKV…QYILIFQLCN (65 aa). A helical membrane pass occupies residues 456 to 476; sequence VFVFLWLVNFSIALGQCTLAG. At 477-510 the chain is on the extracellular side; that stretch reads AFASYYWAFKKPADIPACPLFSSFGRAIRYHTGS. A helical membrane pass occupies residues 511-531; the sequence is LALGSLILALVQFIRIILEYL. The Cytoplasmic segment spans residues 532–605; that stretch reads DHKLKASQNS…RVAVLDKVTD (74 aa). A helical membrane pass occupies residues 606–626; the sequence is FLLFLGKVFVTGSVGVLAFFF. Over 627 to 644 the chain is Extracellular; the sequence is FTRKIPVLTDEAPALNYY. A helical membrane pass occupies residues 645 to 665; it reads WVPLLTVLIGSYLIAHGFFSV. Over 666 to 711 the chain is Cytoplasmic; sequence YAMCVDTLFLCFCEDLERNNGSSSKPYYMSPNLHRILGKKEILSKK.

Belongs to the CTL (choline transporter-like) family.

The protein localises to the cell membrane. It catalyses the reaction choline(out) + n H(+)(in) = choline(in) + n H(+)(out). In terms of biological role, choline/H+ antiporter. This chain is Choline transporter-like protein 5 (slc44a5), found in Xenopus tropicalis (Western clawed frog).